Here is a 1132-residue protein sequence, read N- to C-terminus: Telomerase reverse transcriptase (1132 aa).

Positions 1–66 (MSAKKPVQSK…NQNNANSGGN (66 aa)) are disordered. Composition is skewed to polar residues over residues 9-26 (SKLNIGNPTIPVTSNRST) and 45-55 (QSQNTTTGAFR). One can recognise a Reverse transcriptase domain in the interval 602-956 (KEMRIFCESQ…DLFHWIGISI (355 aa)). Mg(2+)-binding residues include aspartate 708, aspartate 886, and aspartate 887.

It belongs to the reverse transcriptase family. Telomerase subfamily.

Its subcellular location is the nucleus. The protein localises to the chromosome. The protein resides in the telomere. It carries out the reaction DNA(n) + a 2'-deoxyribonucleoside 5'-triphosphate = DNA(n+1) + diphosphate. In terms of biological role, telomerase is a ribonucleoprotein enzyme essential for the replication of chromosome termini in most eukaryotes. It elongates telomeres. It is a reverse transcriptase that adds simple sequence repeats to chromosome ends by copying a template sequence within the RNA component of the enzyme. The protein is Telomerase reverse transcriptase (TERT) of Oxytricha trifallax (Sterkiella histriomuscorum).